Reading from the N-terminus, the 794-residue chain is Histone-lysine N-methyltransferase, H3 lysine-9 specific SUVH5 (794 aa).

Disordered stretches follow at residues 187 to 210 (VGRD…KRSI) and 254 to 276 (SPVK…KNSE). Residues 194–203 (NMGSKFSKNG) show a composition bias toward polar residues. Residues 258 to 276 (PSEKRNGDYGEGSMRKNSE) are compositionally biased toward basic and acidic residues. Residues 365-515 (GTVPGVEVGD…KLVFKFKLRR (151 aa)) enclose the YDG domain. Residues 585–644 (KSCGCTNGCSKSKNCACIVKNGGKIPYYDGAIVEIKPLVYECGPHCKCPPSCNMRVSQHG) enclose the Pre-SET domain. The 118-residue stretch at 647-764 (IKLEIFKTES…PLQELSYDYN (118 aa)) folds into the SET domain. One can recognise a Post-SET domain in the interval 778 to 794 (KKKFCYCGSAECSGRLY).

This sequence belongs to the class V-like SAM-binding methyltransferase superfamily. Histone-lysine methyltransferase family. Suvar3-9 subfamily. In terms of tissue distribution, expressed in leaves stems and flowers.

The protein localises to the nucleus. Its subcellular location is the chromosome. It is found in the centromere. The enzyme catalyses N(6)-methyl-L-lysyl(9)-[histone H3] + S-adenosyl-L-methionine = N(6),N(6)-dimethyl-L-lysyl(9)-[histone H3] + S-adenosyl-L-homocysteine + H(+). It carries out the reaction L-lysyl(9)-[histone H3] + S-adenosyl-L-methionine = N(6)-methyl-L-lysyl(9)-[histone H3] + S-adenosyl-L-homocysteine + H(+). Its function is as follows. Histone methyltransferase. Methylates 'Lys-9' of histone H3. H3 'Lys-9' methylation represents a specific tag for epigenetic transcriptional repression. This Arabidopsis thaliana (Mouse-ear cress) protein is Histone-lysine N-methyltransferase, H3 lysine-9 specific SUVH5 (SUVH5).